The following is a 597-amino-acid chain: Elongation factor 4 (597 aa).

A tr-type G domain is found at 2-184; it reads KNIRNFSIIA…EIVHKIPAPE (183 aa). Residues 14 to 19 and 131 to 134 each bind GTP; these read DHGKST and NKID.

Belongs to the TRAFAC class translation factor GTPase superfamily. Classic translation factor GTPase family. LepA subfamily.

The protein localises to the cell inner membrane. The catalysed reaction is GTP + H2O = GDP + phosphate + H(+). In terms of biological role, required for accurate and efficient protein synthesis under certain stress conditions. May act as a fidelity factor of the translation reaction, by catalyzing a one-codon backward translocation of tRNAs on improperly translocated ribosomes. Back-translocation proceeds from a post-translocation (POST) complex to a pre-translocation (PRE) complex, thus giving elongation factor G a second chance to translocate the tRNAs correctly. Binds to ribosomes in a GTP-dependent manner. This is Elongation factor 4 from Actinobacillus succinogenes (strain ATCC 55618 / DSM 22257 / CCUG 43843 / 130Z).